Consider the following 153-residue polypeptide: Transcriptional repressor NrdR (153 aa).

A zinc finger lies at 3 to 34 (CPFCNSTDTQVKDSRSIENDMLIRRRRVCLVC). The region spanning 49–139 (FMVVKKNGET…VYMNFRNIND (91 aa)) is the ATP-cone domain.

It belongs to the NrdR family. Zn(2+) is required as a cofactor.

Negatively regulates transcription of bacterial ribonucleotide reductase nrd genes and operons by binding to NrdR-boxes. The chain is Transcriptional repressor NrdR from Ehrlichia chaffeensis (strain ATCC CRL-10679 / Arkansas).